The following is a 56-amino-acid chain: Conotoxin Cal6.41a (56 aa).

The signal sequence occupies residues 1 to 23; the sequence is MSGSGAMLLGLLILVAMATSLDT. Cystine bridges form between C27/C41, C33/C50, and C40/C54.

Expressed by the venom duct.

The protein localises to the secreted. Probable neurotoxin. The sequence is that of Conotoxin Cal6.41a from Californiconus californicus (California cone).